Consider the following 309-residue polypeptide: ATP synthase gamma chain (309 aa).

This sequence belongs to the ATPase gamma chain family. F-type ATPases have 2 components, CF(1) - the catalytic core - and CF(0) - the membrane proton channel. CF(1) has five subunits: alpha(3), beta(3), gamma(1), delta(1), epsilon(1). CF(0) has three main subunits: a, b and c.

It localises to the cell membrane. Functionally, produces ATP from ADP in the presence of a proton gradient across the membrane. The gamma chain is believed to be important in regulating ATPase activity and the flow of protons through the CF(0) complex. This is ATP synthase gamma chain from Mycolicibacterium vanbaalenii (strain DSM 7251 / JCM 13017 / BCRC 16820 / KCTC 9966 / NRRL B-24157 / PYR-1) (Mycobacterium vanbaalenii).